We begin with the raw amino-acid sequence, 200 residues long: Ciliary microtubule inner protein 2C (200 aa).

The protein belongs to the CIMIP2 family. As to quaternary structure, microtubule inner protein component of sperm flagellar doublet microtubules.

It is found in the cytoplasm. It localises to the cytoskeleton. The protein resides in the cilium axoneme. Its subcellular location is the flagellum axoneme. Microtubule inner protein (MIP) part of the dynein-decorated doublet microtubules (DMTs) in cilia axoneme, which is required for motile cilia beating. Binds to the intra-tubulin interfaces. This chain is Ciliary microtubule inner protein 2C (Cimip2c), found in Mus musculus (Mouse).